A 964-amino-acid chain; its full sequence is Phosphoenolpyruvate carboxylase (964 aa).

The residue at position 11 (serine 11) is a Phosphoserine. Active-site residues include histidine 172 and lysine 600.

Belongs to the PEPCase type 1 family. As to quaternary structure, homotetramer. Mg(2+) is required as a cofactor.

It is found in the cytoplasm. The enzyme catalyses oxaloacetate + phosphate = phosphoenolpyruvate + hydrogencarbonate. It participates in photosynthesis; C4 acid pathway. With respect to regulation, by light-reversible phosphorylation. Functionally, through the carboxylation of phosphoenolpyruvate (PEP) it forms oxaloacetate, a four-carbon dicarboxylic acid source for the tricarboxylic acid cycle. In Amaranthus hypochondriacus (Prince-of-Wales feather), this protein is Phosphoenolpyruvate carboxylase.